Reading from the N-terminus, the 162-residue chain is Transcription elongation factor GreA (162 aa).

Positions 44 to 72 form a coiled coil; sequence ENAEYHAAKEKQSHIERRIAELSDILSRA.

It belongs to the GreA/GreB family.

Functionally, necessary for efficient RNA polymerase transcription elongation past template-encoded arresting sites. The arresting sites in DNA have the property of trapping a certain fraction of elongating RNA polymerases that pass through, resulting in locked ternary complexes. Cleavage of the nascent transcript by cleavage factors such as GreA or GreB allows the resumption of elongation from the new 3'terminus. GreA releases sequences of 2 to 3 nucleotides. The polypeptide is Transcription elongation factor GreA (Nautilia profundicola (strain ATCC BAA-1463 / DSM 18972 / AmH)).